The sequence spans 591 residues: V-type ATP synthase alpha chain (591 aa).

Residue 242-249 coordinates ATP; the sequence is GPFGAGKT.

Belongs to the ATPase alpha/beta chains family.

The enzyme catalyses ATP + H2O + 4 H(+)(in) = ADP + phosphate + 5 H(+)(out). In terms of biological role, produces ATP from ADP in the presence of a proton gradient across the membrane. The V-type alpha chain is a catalytic subunit. The sequence is that of V-type ATP synthase alpha chain (atpA) from Chlamydia muridarum (strain MoPn / Nigg).